We begin with the raw amino-acid sequence, 89 residues long: Small ribosomal subunit protein uS14 (89 aa).

The protein belongs to the universal ribosomal protein uS14 family. In terms of assembly, part of the 30S ribosomal subunit. Contacts proteins S3 and S10.

Functionally, binds 16S rRNA, required for the assembly of 30S particles and may also be responsible for determining the conformation of the 16S rRNA at the A site. This is Small ribosomal subunit protein uS14 from Chlorobium phaeovibrioides (strain DSM 265 / 1930) (Prosthecochloris vibrioformis (strain DSM 265)).